Reading from the N-terminus, the 190-residue chain is dCTP deaminase (190 aa).

Residues 113–118 (KSTYAR), 137–139 (TLE), Q158, Y172, and Q182 contribute to the dCTP site. E139 (proton donor/acceptor) is an active-site residue.

Belongs to the dCTP deaminase family. As to quaternary structure, homotrimer.

It catalyses the reaction dCTP + H2O + H(+) = dUTP + NH4(+). It functions in the pathway pyrimidine metabolism; dUMP biosynthesis; dUMP from dCTP (dUTP route): step 1/2. Functionally, catalyzes the deamination of dCTP to dUTP. In Chromobacterium violaceum (strain ATCC 12472 / DSM 30191 / JCM 1249 / CCUG 213 / NBRC 12614 / NCIMB 9131 / NCTC 9757 / MK), this protein is dCTP deaminase.